A 208-amino-acid polypeptide reads, in one-letter code: Protein GrpE (208 aa).

A compositionally biased stretch (basic and acidic residues) spans 1–12 (MTNKDESVEKNT). Residues 1–49 (MTNKDESVEKNTESTVEVTNVKQNIDDSVEQTEESKGHLQDEAIEETSD) form a disordered region. The segment covering 13–23 (ESTVEVTNVKQ) has biased composition (polar residues).

The protein belongs to the GrpE family. In terms of assembly, homodimer.

It localises to the cytoplasm. In terms of biological role, participates actively in the response to hyperosmotic and heat shock by preventing the aggregation of stress-denatured proteins, in association with DnaK and GrpE. It is the nucleotide exchange factor for DnaK and may function as a thermosensor. Unfolded proteins bind initially to DnaJ; upon interaction with the DnaJ-bound protein, DnaK hydrolyzes its bound ATP, resulting in the formation of a stable complex. GrpE releases ADP from DnaK; ATP binding to DnaK triggers the release of the substrate protein, thus completing the reaction cycle. Several rounds of ATP-dependent interactions between DnaJ, DnaK and GrpE are required for fully efficient folding. This Staphylococcus aureus (strain bovine RF122 / ET3-1) protein is Protein GrpE.